A 457-amino-acid chain; its full sequence is Phosphomethylpyrimidine synthase (457 aa).

Substrate contacts are provided by residues N80, M109, Y139, H175, 195–197 (SRG), 236–239 (DSLR), and E275. Residue H279 coordinates Zn(2+). Y302 lines the substrate pocket. Zn(2+) is bound at residue H343. Positions 423, 426, and 431 each coordinate [4Fe-4S] cluster.

This sequence belongs to the ThiC family. Requires [4Fe-4S] cluster as cofactor.

It catalyses the reaction 5-amino-1-(5-phospho-beta-D-ribosyl)imidazole + S-adenosyl-L-methionine = 4-amino-2-methyl-5-(phosphooxymethyl)pyrimidine + CO + 5'-deoxyadenosine + formate + L-methionine + 3 H(+). It participates in cofactor biosynthesis; thiamine diphosphate biosynthesis. Its function is as follows. Catalyzes the synthesis of the hydroxymethylpyrimidine phosphate (HMP-P) moiety of thiamine from aminoimidazole ribotide (AIR) in a radical S-adenosyl-L-methionine (SAM)-dependent reaction. The sequence is that of Phosphomethylpyrimidine synthase from Nostoc punctiforme (strain ATCC 29133 / PCC 73102).